The sequence spans 316 residues: Acetyl-coenzyme A carboxylase carboxyl transferase subunit alpha (316 aa).

Residues 36–290 enclose the CoA carboxyltransferase C-terminal domain; the sequence is LLEERLARLR…KEALLKALEE (255 aa).

The protein belongs to the AccA family. Acetyl-CoA carboxylase is a heterohexamer composed of biotin carboxyl carrier protein (AccB), biotin carboxylase (AccC) and two subunits each of ACCase subunit alpha (AccA) and ACCase subunit beta (AccD).

It is found in the cytoplasm. It carries out the reaction N(6)-carboxybiotinyl-L-lysyl-[protein] + acetyl-CoA = N(6)-biotinyl-L-lysyl-[protein] + malonyl-CoA. It functions in the pathway lipid metabolism; malonyl-CoA biosynthesis; malonyl-CoA from acetyl-CoA: step 1/1. In terms of biological role, component of the acetyl coenzyme A carboxylase (ACC) complex. First, biotin carboxylase catalyzes the carboxylation of biotin on its carrier protein (BCCP) and then the CO(2) group is transferred by the carboxyltransferase to acetyl-CoA to form malonyl-CoA. This Thermus thermophilus (strain ATCC 27634 / DSM 579 / HB8) protein is Acetyl-coenzyme A carboxylase carboxyl transferase subunit alpha.